Consider the following 347-residue polypeptide: Selenide, water dikinase (347 aa).

Cysteine 17 is an active-site residue. Residues lysine 20 and 48–50 (TRD) each bind ATP. Mg(2+) is bound at residue aspartate 51. ATP-binding positions include aspartate 68, aspartate 91, and 139–141 (GHS). Residue aspartate 91 participates in Mg(2+) binding. Aspartate 227 is a Mg(2+) binding site.

Belongs to the selenophosphate synthase 1 family. Class I subfamily. In terms of assembly, homodimer. Mg(2+) serves as cofactor.

The enzyme catalyses hydrogenselenide + ATP + H2O = selenophosphate + AMP + phosphate + 2 H(+). Its function is as follows. Synthesizes selenophosphate from selenide and ATP. This is Selenide, water dikinase from Escherichia coli O139:H28 (strain E24377A / ETEC).